The chain runs to 137 residues: Nucleoside diphosphate kinase (137 aa).

Positions 9, 57, 85, 91, 102, and 112 each coordinate ATP. The Pros-phosphohistidine intermediate role is filled by His115.

This sequence belongs to the NDK family. Homotetramer. It depends on Mg(2+) as a cofactor.

It localises to the cytoplasm. The catalysed reaction is a 2'-deoxyribonucleoside 5'-diphosphate + ATP = a 2'-deoxyribonucleoside 5'-triphosphate + ADP. It catalyses the reaction a ribonucleoside 5'-diphosphate + ATP = a ribonucleoside 5'-triphosphate + ADP. In terms of biological role, major role in the synthesis of nucleoside triphosphates other than ATP. The ATP gamma phosphate is transferred to the NDP beta phosphate via a ping-pong mechanism, using a phosphorylated active-site intermediate. The chain is Nucleoside diphosphate kinase from Syntrophotalea carbinolica (strain DSM 2380 / NBRC 103641 / GraBd1) (Pelobacter carbinolicus).